A 283-amino-acid polypeptide reads, in one-letter code: Glutamate racemase (283 aa).

Substrate is bound by residues 28–29 and 60–61; these read DS and YG. Catalysis depends on Cys92, which acts as the Proton donor/acceptor. 93-94 provides a ligand contact to substrate; that stretch reads NT. Cys204 acts as the Proton donor/acceptor in catalysis. 205-206 serves as a coordination point for substrate; the sequence is TH.

Belongs to the aspartate/glutamate racemases family.

It catalyses the reaction L-glutamate = D-glutamate. Its pathway is cell wall biogenesis; peptidoglycan biosynthesis. In terms of biological role, provides the (R)-glutamate required for cell wall biosynthesis. The sequence is that of Glutamate racemase from Salmonella choleraesuis (strain SC-B67).